Here is a 77-residue protein sequence, read N- to C-terminus: Defensin-like protein 1 (77 aa).

Positions 1-30 (MKLSVRFISAALLLFMVFIATGMGPVTVEA) are cleaved as a signal peptide. 4 disulfide bridges follow: cysteine 33/cysteine 77, cysteine 44/cysteine 64, cysteine 50/cysteine 71, and cysteine 54/cysteine 73.

This sequence belongs to the DEFL family. As to expression, expressed in the whole plant except roots.

It localises to the secreted. Functionally, confers broad-spectrum resistance to pathogens. This chain is Defensin-like protein 1 (PDF2.3), found in Arabidopsis thaliana (Mouse-ear cress).